Reading from the N-terminus, the 578-residue chain is ATP-dependent RNA helicase dbp3 (578 aa).

A compositionally biased stretch (basic and acidic residues) spans 59–69; the sequence is KRSADEEASVK. The tract at residues 59 to 117 is disordered; the sequence is KRSADEEASVKRKEKKSKHEHKKHKKDKPSADKDRISKKDKKKSKKGKSKTKEESIEIN. Basic residues predominate over residues 70–85; sequence RKEKKSKHEHKKHKKD. The segment covering 86-95 has biased composition (basic and acidic residues); that stretch reads KPSADKDRIS. Basic residues predominate over residues 96–107; that stretch reads KKDKKKSKKGKS. The Q motif signature appears at 167–193; it reads LQFDELDVSAKLREGLKNYKEPTPIQA. In terms of domain architecture, Helicase ATP-binding spans 196–373; that stretch reads WPYLLAGRDV…ATFLKDPVKI (178 aa). 209–216 lines the ATP pocket; that stretch reads AETGSGKT. The DEAD box motif lies at 316–319; the sequence is DEAD. Residues 402–550 enclose the Helicase C-terminal domain; it reads MLDNLLRKHL…DIPEGLFKFG (149 aa).

This sequence belongs to the DEAD box helicase family. DDX5/DBP2 subfamily.

Its subcellular location is the nucleus. The protein localises to the nucleolus. The enzyme catalyses ATP + H2O = ADP + phosphate + H(+). Its function is as follows. ATP-dependent RNA helicase required for 60S ribosomal subunit synthesis. Involved in efficient pre-rRNA processing, predominantly at site A3, which is necessary for the normal formation of 25S and 5.8S rRNAs. The sequence is that of ATP-dependent RNA helicase dbp3 (dbp3) from Schizosaccharomyces pombe (strain 972 / ATCC 24843) (Fission yeast).